The chain runs to 416 residues: MLYNLSKAVLALSVLAASADAAGIRLEKRASTFDYETEMVRGVCLGGWLVLEPWLSPGLFDAAPDGAVDEWTYTEILGQDEAKARLIGHWDTFITEQDFFDIAAAGMNHVRIPIGYWAVEALPGDPYVDGQLEYLDRAIEWAGAAGLKVIVDLHGAPGSQNGFDNSGRKGAIQWGQGDTLGQTVNAFRKLAERYVPSSDVVTAIEAVNEPFIPGGVNEDQLKEYYQQAYDIVTQMSPDVDLVFSDGFINPTPWNGFISDSGNIVMDNHHYEVFDINLLRMSVDDHVRSVCDFGRTQLAPATKPVVVGEWTGAMTDCARYLNGRGVGARYDGAMGGESVGDCGPFIQGSVSDLSPDDQKNMRRFIEAQLDAWEMKSGWLFWNWKTEQGAPGWDMKDLLDNGVFPFPLESRKYPGQCG.

The signal sequence occupies residues 1–21; that stretch reads MLYNLSKAVLALSVLAASADA. Catalysis depends on E209, which acts as the Proton donor. 2 disulfide bridges follow: C290/C415 and C316/C341. Catalysis depends on E308, which acts as the Nucleophile.

This sequence belongs to the glycosyl hydrolase 5 (cellulase A) family. Monomer. It depends on Mn(2+) as a cofactor.

The protein resides in the secreted. The enzyme catalyses Successive hydrolysis of beta-D-glucose units from the non-reducing ends of (1-&gt;3)-beta-D-glucans, releasing alpha-glucose.. Beta-glucanases participate in the metabolism of beta-glucan, the main structural component of the cell wall. It could also function biosynthetically as a transglycosylase. The polypeptide is Probable glucan 1,3-beta-glucosidase A (exgA) (Aspergillus terreus (strain NIH 2624 / FGSC A1156)).